The following is a 556-amino-acid chain: U-box domain-containing protein 38 (556 aa).

The tract at residues 1-34 (MGKNGRLRWNPFSHRSSSSTSSSSRQQQQEQQPP) is disordered. The span at 13 to 32 (SHRSSSSTSSSSRQQQQEQQ) shows a compositional bias: low complexity. The 77-residue stretch at 32 to 108 (QPPVEFLCPI…DTWCDTVGVS (77 aa)) folds into the U-box domain. ARM repeat units follow at residues 256-295 (DEAR…NLSL), 297-336 (KKNK…SLSL), 338-378 (DDNK…HLTL), 380-417 (QTNR…NLAC), and 418-468 (CSEG…ALSH).

In terms of assembly, binds to SD16, SD17, SD18 and SD129.

It carries out the reaction S-ubiquitinyl-[E2 ubiquitin-conjugating enzyme]-L-cysteine + [acceptor protein]-L-lysine = [E2 ubiquitin-conjugating enzyme]-L-cysteine + N(6)-ubiquitinyl-[acceptor protein]-L-lysine.. Its pathway is protein modification; protein ubiquitination. In terms of biological role, functions as an E3 ubiquitin ligase. This chain is U-box domain-containing protein 38 (PUB38), found in Arabidopsis thaliana (Mouse-ear cress).